The following is a 354-amino-acid chain: Fe(3+) ions import ATP-binding protein FbpC (354 aa).

The ABC transporter domain occupies 4–236 (LELHAVHKSF…PRDAQTALFL (233 aa)). 36–43 (GPSGSGKT) contributes to the ATP binding site.

The protein belongs to the ABC transporter superfamily. Fe(3+) ion importer (TC 3.A.1.10) family. In terms of assembly, the complex is composed of two ATP-binding proteins (FbpC), two transmembrane proteins (FbpB) and a solute-binding protein (FbpA).

It localises to the cell inner membrane. It catalyses the reaction Fe(3+)(out) + ATP + H2O = Fe(3+)(in) + ADP + phosphate + H(+). In terms of biological role, part of the ABC transporter complex FbpABC involved in Fe(3+) ions import. Responsible for energy coupling to the transport system. The sequence is that of Fe(3+) ions import ATP-binding protein FbpC from Pseudomonas fluorescens (strain ATCC BAA-477 / NRRL B-23932 / Pf-5).